We begin with the raw amino-acid sequence, 312 residues long: Malate dehydrogenase 1 (312 aa).

Residues glycine 11–glycine 16 and aspartate 35 contribute to the NAD(+) site. 2 residues coordinate substrate: arginine 86 and arginine 92. NAD(+)-binding positions include asparagine 99 and isoleucine 122–asparagine 124. Substrate contacts are provided by asparagine 124 and arginine 155. Residue histidine 179 is the Proton acceptor of the active site.

The protein belongs to the LDH/MDH superfamily. MDH type 3 family.

The catalysed reaction is (S)-malate + NAD(+) = oxaloacetate + NADH + H(+). Catalyzes the reversible oxidation of malate to oxaloacetate. This is Malate dehydrogenase 1 from Anaeromyxobacter dehalogenans (strain 2CP-C).